Consider the following 498-residue polypeptide: Acetyl-coenzyme A carboxylase carboxyl transferase subunit beta, chloroplastic (498 aa).

The CoA carboxyltransferase N-terminal domain maps to 228–498; sequence LWVQCEICYG…LNHNLSRTLT (271 aa). Residues Cys232, Cys235, Cys251, and Cys254 each coordinate Zn(2+). The C4-type zinc-finger motif lies at 232–254; that stretch reads CEICYGLNYKKFFKSKMNICEQC.

Belongs to the AccD/PCCB family. As to quaternary structure, acetyl-CoA carboxylase is a heterohexamer composed of biotin carboxyl carrier protein, biotin carboxylase and 2 subunits each of ACCase subunit alpha and ACCase plastid-coded subunit beta (accD). It depends on Zn(2+) as a cofactor.

The protein localises to the plastid. Its subcellular location is the chloroplast stroma. The enzyme catalyses N(6)-carboxybiotinyl-L-lysyl-[protein] + acetyl-CoA = N(6)-biotinyl-L-lysyl-[protein] + malonyl-CoA. It participates in lipid metabolism; malonyl-CoA biosynthesis; malonyl-CoA from acetyl-CoA: step 1/1. In terms of biological role, component of the acetyl coenzyme A carboxylase (ACC) complex. Biotin carboxylase (BC) catalyzes the carboxylation of biotin on its carrier protein (BCCP) and then the CO(2) group is transferred by the transcarboxylase to acetyl-CoA to form malonyl-CoA. This Populus alba (White poplar) protein is Acetyl-coenzyme A carboxylase carboxyl transferase subunit beta, chloroplastic.